A 1874-amino-acid chain; its full sequence is Protein TIC 214 (1874 aa).

Helical transmembrane passes span Ile-18–Gly-38, Phe-64–Leu-84, Pro-87–His-107, Leu-124–Leu-144, Val-172–Ile-192, and Ile-221–Ile-241. Disordered regions lie at residues Glu-248–Val-310 and Lys-1567–Asp-1624. Positions Gly-255 to Thr-268 are enriched in acidic residues. 2 stretches are compositionally biased toward basic and acidic residues: residues Asp-298–Val-310 and Asn-1584–Ala-1601.

The protein belongs to the TIC214 family. In terms of assembly, part of the Tic complex.

The protein localises to the plastid. The protein resides in the chloroplast inner membrane. Involved in protein precursor import into chloroplasts. May be part of an intermediate translocation complex acting as a protein-conducting channel at the inner envelope. The polypeptide is Protein TIC 214 (Coffea arabica (Arabian coffee)).